Here is a 102-residue protein sequence, read N- to C-terminus: MTVPLTQYLLVAAILFTIGVAGIILNRKNIIIILMSVELILLSVNLNLVAFSASLGDLTGQIFALFILTVAAAEAAIGLAILVTFYRNRGSIAVEDIHMMKG.

3 consecutive transmembrane segments (helical) span residues 5-25 (LTQY…GIIL), 30-50 (IIII…NLVA), and 62-82 (IFAL…LAIL).

It belongs to the complex I subunit 4L family. As to quaternary structure, NDH-1 is composed of 14 different subunits. Subunits NuoA, H, J, K, L, M, N constitute the membrane sector of the complex.

The protein resides in the cell inner membrane. The enzyme catalyses a quinone + NADH + 5 H(+)(in) = a quinol + NAD(+) + 4 H(+)(out). NDH-1 shuttles electrons from NADH, via FMN and iron-sulfur (Fe-S) centers, to quinones in the respiratory chain. The immediate electron acceptor for the enzyme in this species is believed to be ubiquinone. Couples the redox reaction to proton translocation (for every two electrons transferred, four hydrogen ions are translocated across the cytoplasmic membrane), and thus conserves the redox energy in a proton gradient. The polypeptide is NADH-quinone oxidoreductase subunit K (Beijerinckia indica subsp. indica (strain ATCC 9039 / DSM 1715 / NCIMB 8712)).